The primary structure comprises 172 residues: Adenine phosphoribosyltransferase (172 aa).

It belongs to the purine/pyrimidine phosphoribosyltransferase family. As to quaternary structure, homodimer.

The protein localises to the cytoplasm. The catalysed reaction is AMP + diphosphate = 5-phospho-alpha-D-ribose 1-diphosphate + adenine. Its pathway is purine metabolism; AMP biosynthesis via salvage pathway; AMP from adenine: step 1/1. In terms of biological role, catalyzes a salvage reaction resulting in the formation of AMP, that is energically less costly than de novo synthesis. This chain is Adenine phosphoribosyltransferase, found in Staphylococcus saprophyticus subsp. saprophyticus (strain ATCC 15305 / DSM 20229 / NCIMB 8711 / NCTC 7292 / S-41).